The primary structure comprises 147 residues: 3-dehydroquinate dehydratase (147 aa).

Y22 acts as the Proton acceptor in catalysis. Substrate is bound by residues N74, H80, and D87. H101 functions as the Proton donor in the catalytic mechanism. Residues 102–103 (IS) and R112 each bind substrate.

The protein belongs to the type-II 3-dehydroquinase family. Homododecamer.

It catalyses the reaction 3-dehydroquinate = 3-dehydroshikimate + H2O. It participates in metabolic intermediate biosynthesis; chorismate biosynthesis; chorismate from D-erythrose 4-phosphate and phosphoenolpyruvate: step 3/7. In terms of biological role, catalyzes a trans-dehydration via an enolate intermediate. The polypeptide is 3-dehydroquinate dehydratase (Lachnospira eligens (strain ATCC 27750 / DSM 3376 / VPI C15-48 / C15-B4) (Eubacterium eligens)).